The sequence spans 83 residues: Neurotoxin LmNaTx10 (83 aa).

The signal sequence occupies residues 1–19 (MNFLIFIAVASSLALGALC). The LCN-type CS-alpha/beta domain occupies 21-80 (KEGYPYDGNNCRYICFRNQYCDDLCKKLKGESGYCYGWNQSCYCYGLPDTEKTKPDKRCH). 4 disulfide bridges follow: C31–C79, C35–C55, C41–C62, and C45–C64.

It belongs to the long (4 C-C) scorpion toxin superfamily. Sodium channel inhibitor family. Alpha subfamily. In terms of tissue distribution, expressed by the venom gland.

The protein localises to the secreted. In terms of biological role, binds voltage-independently at site-3 of voltage-gated sodium channels (Nav) and inhibits the inactivation of the activated channels, thereby blocking neuronal transmission. The polypeptide is Neurotoxin LmNaTx10 (Lychas mucronatus (Chinese swimming scorpion)).